We begin with the raw amino-acid sequence, 320 residues long: Tyrosine recombinase Synpcc7942_B2651 (320 aa).

One can recognise a Core-binding (CB) domain in the interval 16–106 (VQDWDVLQML…ALKSLVRFSR (91 aa)). The Tyr recombinase domain maps to 127–313 (RDTTGTTPER…RQDFQGECTE (187 aa)). Catalysis depends on residues R167, K193, H264, R267, and H291. The active-site O-(3'-phospho-DNA)-tyrosine intermediate is the Y300.

It belongs to the 'phage' integrase family.

The protein localises to the cytoplasm. In terms of biological role, site-specific tyrosine recombinase, which acts by catalyzing the cutting and rejoining of the recombining DNA molecules. This is Tyrosine recombinase Synpcc7942_B2651 from Synechococcus elongatus (strain ATCC 33912 / PCC 7942 / FACHB-805) (Anacystis nidulans R2).